Consider the following 438-residue polypeptide: RING finger protein 150 (438 aa).

Residues 1–34 (MAMSLIQACCSLALSTWLLSFCFVHLLCLDFTVA) form the signal peptide. Topologically, residues 35–208 (EKEEWYTAFV…NLQKYVSRTS (174 aa)) are extracellular. N45, N125, N153, and N186 each carry an N-linked (GlcNAc...) asparagine glycan. A PA domain is found at 81–183 (SPKQDARGEV…PKGKEIVSLL (103 aa)). Residues 209-229 (VVFVSISFIVLMIISLAWLVF) form a helical membrane-spanning segment. Residues 230 to 438 (YYIQRFRYAN…TDQDCEEVKS (209 aa)) are Cytoplasmic-facing. The RING-type; atypical zinc-finger motif lies at 278–319 (CAVCIEGYKPNDVVRILPCRHLFHKSCVDPWLLDHRTCPMCK).

The protein localises to the membrane. The sequence is that of RING finger protein 150 (RNF150) from Homo sapiens (Human).